Here is a 1762-residue protein sequence, read N- to C-terminus: Non-reducing polyketide synthase PKS8-1 (1762 aa).

The N-terminal acylcarrier protein transacylase domain (SAT) stretch occupies residues 17–247 (DIYRGLHNHS…ARYIELPVYG (231 aa)). One can recognise a Ketosynthase family 3 (KS3) domain in the interval 385 to 819 (QSKLAITGIS…GGNTTMVLEE (435 aa)). Residues Cys-558, His-694, and His-737 each act as for beta-ketoacyl synthase activity in the active site. Positions 920–1240 (FSFTGQGASH…MAALHLTGVA (321 aa)) are malonyl-CoA:ACP transacylase (MAT) domain. The interval 1308–1622 (TSTVQQVIAL…PRILLNRFFS (315 aa)) is product template (PT) domain. An N-terminal hotdog fold region spans residues 1312-1448 (QQVIALEVEG…GDANDWLSSW (137 aa)). Residues 1312-1618 (QQVIALEVEG…FRSYPRILLN (307 aa)) form the PKS/mFAS DH domain. His-1344 (proton acceptor; for dehydratase activity) is an active-site residue. Residues 1471-1618 (ASRFTRNMAY…FRSYPRILLN (148 aa)) form a C-terminal hotdog fold region. The active-site Proton donor; for dehydratase activity is Asp-1529. Residues 1632–1689 (RAGNAATVTPQVTIPKPPSSLKTPAPANPSRRDSGVESKPLPPPQPKQAPPSTDSENS) are disordered. Residues 1671-1680 (PLPPPQPKQA) are compositionally biased toward pro residues. In terms of domain architecture, Carrier spans 1685–1762 (DSENSTISKA…DMRRWLEEHY (78 aa)). Residue Ser-1722 is modified to O-(pantetheine 4'-phosphoryl)serine.

It catalyses the reaction holo-[ACP] + 8 malonyl-CoA + 8 H(+) = atrochrysone carboxyl-[ACP] + 8 CO2 + 8 CoA + 2 H2O. The protein operates within secondary metabolite biosynthesis. In terms of biological role, non-reducing polyketide synthase; part of the gene cluster that mediates the biosynthesis of an emodin derivative that may be involved in black Sigatoka disease of banana. The pathway begins with the synthesis of atrochrysone thioester by the polyketide synthase PKS8-1. The atrochrysone carboxyl ACP thioesterase MYCFIDRAFT_190111 then breaks the thioester bond and releases the atrochrysone carboxylic acid from PKS8-1. The decarboxylase MYCFIDRAFT_34057 then catalyzes the concerted decarboxylation-elimination required to convert atochrysone carboxylic acid into emodin anthrone, which is further oxidized to emodin by the anthrone oxygenase MYCFIDRAFT_34418. The functions of the other tailoring enzymes as well as the final product of the cluster have still to be identified. This Pseudocercospora fijiensis (strain CIRAD86) (Black leaf streak disease fungus) protein is Non-reducing polyketide synthase PKS8-1 (PKS8-1).